Consider the following 150-residue polypeptide: Macrodomain Ter protein (150 aa).

This sequence belongs to the MatP family. In terms of assembly, homodimer.

The protein resides in the cytoplasm. Its function is as follows. Required for spatial organization of the terminus region of the chromosome (Ter macrodomain) during the cell cycle. Prevents early segregation of duplicated Ter macrodomains during cell division. Binds specifically to matS, which is a 13 bp signature motif repeated within the Ter macrodomain. This chain is Macrodomain Ter protein, found in Shigella boydii serotype 18 (strain CDC 3083-94 / BS512).